Here is a 217-residue protein sequence, read N- to C-terminus: MLDRFIPEFDRALRAVAGVTRASRPNPADAVIASAASTNTADNATKLSEADRRHAAGLMRVNHVGEVCAQALYQGQALFARDPAIRTQLDEAAREEEDHLAWCAQRLQELNDRPSLLNPLWYAGAFAIGAVAGRLGDKISLGFVAETERQVEHHLDGHLDTLPEQDTRSRAIVAQMRDDEIRHGDNARQAGGIDLPAPIRQAMRAASRVMTTAAYRI.

Residues glutamate 66, glutamate 96, histidine 99, glutamate 148, glutamate 180, and histidine 183 each coordinate Fe cation.

Belongs to the COQ7 family. Fe cation serves as cofactor.

Its subcellular location is the cell membrane. It catalyses the reaction a 5-methoxy-2-methyl-3-(all-trans-polyprenyl)benzene-1,4-diol + AH2 + O2 = a 3-demethylubiquinol + A + H2O. The protein operates within cofactor biosynthesis; ubiquinone biosynthesis. Its function is as follows. Catalyzes the hydroxylation of 2-nonaprenyl-3-methyl-6-methoxy-1,4-benzoquinol during ubiquinone biosynthesis. This Ralstonia pickettii (strain 12J) protein is 3-demethoxyubiquinol 3-hydroxylase.